Here is a 1482-residue protein sequence, read N- to C-terminus: MIERGKFRSLTLVNWNGFFARTFDLDELVTTLSGGNGAGKSTTMAAFVTALIPDLTLLHFRNTTEAGATSGSRDKGLHGKLRAGVCYSVLDVINSRHQRVVVGVRLQQVAGRDRKVDIKPFAIQGLPTSILPTQLLTETLNDRQARVVSLNELKDKLEAMEGVQFKQFNSITEYHSLMFDLGVVARRLRSASDRSKYYRLIEASLYGGISSTITRSLRDYLLPENSGVRKAFQDMEAALRENRMTLEAIRVTQSDRDLFKHLISEATNYVAADYMRHANERRIHLDKALEYRRDLFTSRSQLAAEQYKHVDMARELQEHNGAEGDLEADYQAASDHLNLVQTALRQQEKIERYEADLDELQIRLEEQNEVVAEAVDRQEENEARAEAAELEVDELKSQLADYQQALDVQQTRAIQYNQALQALERAKALCHLPDLTPESADEWLETFQAKEQEATEKMLSLEQKMSVAQTAHSQFEQAYQLVAAINGPLARNEAWDVARELLRDGVNQRHQAEQAQGLRSRLNELEQRLREQQDAERQLAEFCKRQGKRYDIDDLETLHQELEARIASLADSVSNAQEQRMALRQELEQLQSRTQTLMRRAPVWLAAQNSLNQLCEQSGEQFASGQEVTEYLQQLLEREREAIVERDEVGARKRAIDEEIERLSQPGGSEDPRLNALAERFGGVLLSEIYDDVSLDDAPYFSALYGPSRHAIVVPDLSRVAEQLEGLEDCPEDLYLIEGDPQSFDDSVFSVDELEKAVVVKIADRQWRYSRFPSLPLFGRAARENRIETLHAERESLSERFATLSFDVQKTQRLHQAFSRFIGSHLAVAFEDDPEEEIRKLNSRRGELERALSAHESDNQQNRVQYEQAKEGVSALNRLLPRLNLLADDTLADRVDEIQERLDEAQEAARFIQQYGNQLAKLEPIVSVLQSDPEQFEQLKEDYAYAQQTQRDARQQAFALAEVVQRRAHFSYSDSAEMLSGNSDLNEKLRQRLEQAESERSRARDAMRAHAAQLSQYNQVLASLKSSYDTKKELLNDLYKELQDIGVRADAGAEERARARRDELHMQLSNNRSRRNQLEKALTFCEAEMDNLTRKLRKLERDYCEMREQVVTAKAGWCAVMRLVKDNGVERRLHRRELAYLSADELRSMSDKALGALRLAVADNEHLRDVLRISEDPKRPERKIQFFVAVYQHLRERIRQDIIRTDDPVEAIEQMEIELSRLTEELTNREQKLAISSRSVANIIRKTIQREQNRIRMLNQGLQSVSFGQVNSVRLNVNVRETHSMLLDVLSEQHEQHQDLFNSNRLTFSEALAKLYQRLNPQIDMGQRTPQTIGEELLDYRNYLEMEVEVNRGSDGWLRAESGALSTGEAIGTGMSILVMVVQSWEDESRRLRGKDISPCRLLFLDEAARLDARSIATLFELCERLEMQLIIAAPENISPEKGTTYKLVRKVFNNHEHVHVVGLRGFAAPLPEALPGTADAS.

Residue 34-41 (GGNGAGKS) coordinates ATP. 5 coiled-coil regions span residues 326 to 472 (LEAD…QTAH), 507 to 602 (NQRH…RRAP), 780 to 805 (RAAR…ATLS), 832 to 1110 (DDPE…REQV), and 1209 to 1265 (VEAI…LQSV). The tract at residues 666 to 783 (PGGSEDPRLN…SLPLFGRAAR (118 aa)) is flexible hinge.

This sequence belongs to the SMC family. MukB subfamily. As to quaternary structure, homodimerization via its hinge domain. Binds to DNA via its C-terminal region. Interacts, and probably forms a ternary complex, with MukE and MukF via its C-terminal region. The complex formation is stimulated by calcium or magnesium. Interacts with tubulin-related protein FtsZ.

Its subcellular location is the cytoplasm. It is found in the nucleoid. Plays a central role in chromosome condensation, segregation and cell cycle progression. Functions as a homodimer, which is essential for chromosome partition. Involved in negative DNA supercoiling in vivo, and by this means organize and compact chromosomes. May achieve or facilitate chromosome segregation by condensation DNA from both sides of a centrally located replisome during cell division. The polypeptide is Chromosome partition protein MukB (Klebsiella pneumoniae subsp. pneumoniae (strain ATCC 700721 / MGH 78578)).